The chain runs to 72 residues: U10-myrmicitoxin-Tb1a (72 aa).

A signal peptide spans 1 to 26 (MRVSYLSLTLTIVVVIAIIYAPETEA). Residues 27-36 (KAWADADAEA) constitute a propeptide that is removed on maturation.

Belongs to the formicidae venom precursor-01 superfamily. In terms of tissue distribution, expressed by the venom gland.

Its subcellular location is the secreted. Functionally, in vivo, this neurotoxin paralyzes about 40% of blowflies (L.caesar) one hour after intrathoracic injection, when tested at high doses (28 nmol/g). The chain is U10-myrmicitoxin-Tb1a from Tetramorium bicarinatum (Tramp ant).